A 102-amino-acid polypeptide reads, in one-letter code: Integration host factor subunit alpha (102 aa).

It belongs to the bacterial histone-like protein family. As to quaternary structure, heterodimer of an alpha and a beta chain.

This protein is one of the two subunits of integration host factor, a specific DNA-binding protein that functions in genetic recombination as well as in transcriptional and translational control. The chain is Integration host factor subunit alpha from Albidiferax ferrireducens (strain ATCC BAA-621 / DSM 15236 / T118) (Rhodoferax ferrireducens).